The primary structure comprises 320 residues: ATP-dependent 6-phosphofructokinase isozyme 1 (320 aa).

Gly12 is a binding site for ATP. ADP is bound by residues Arg22–Arg26 and Arg55–Asp60. Residues Arg73–Phe74 and Gly103–Ser106 contribute to the ATP site. A Mg(2+)-binding site is contributed by Asp104. Residue Thr126–Asp128 coordinates substrate. The active-site Proton acceptor is Asp128. Arg155 serves as a coordination point for ADP. Residues Arg163 and Met170–Arg172 each bind substrate. ADP-binding positions include Gly186–Glu188, Lys212, and Lys214–His216. Residues Glu223, Arg244, and His250–Arg253 contribute to the substrate site.

It belongs to the phosphofructokinase type A (PFKA) family. ATP-dependent PFK group I subfamily. Prokaryotic clade 'B1' sub-subfamily. Homotetramer. It depends on Mg(2+) as a cofactor.

Its subcellular location is the cytoplasm. The catalysed reaction is beta-D-fructose 6-phosphate + ATP = beta-D-fructose 1,6-bisphosphate + ADP + H(+). It functions in the pathway carbohydrate degradation; glycolysis; D-glyceraldehyde 3-phosphate and glycerone phosphate from D-glucose: step 3/4. Allosterically activated by ADP and other diphosphonucleosides, and allosterically inhibited by phosphoenolpyruvate. Catalyzes the phosphorylation of D-fructose 6-phosphate to fructose 1,6-bisphosphate by ATP, the first committing step of glycolysis. This is ATP-dependent 6-phosphofructokinase isozyme 1 from Escherichia coli O6:H1 (strain CFT073 / ATCC 700928 / UPEC).